The primary structure comprises 64 residues: DNA gyrase inhibitor YacG (64 aa).

Positions 9, 12, 28, and 32 each coordinate Zn(2+). The segment at 45 to 64 is disordered; it reads KRIPSAGDLSDSDDWSEQQP. The span at 54 to 64 shows a compositional bias: acidic residues; the sequence is SDSDDWSEQQP.

This sequence belongs to the DNA gyrase inhibitor YacG family. As to quaternary structure, interacts with GyrB. Zn(2+) serves as cofactor.

Functionally, inhibits all the catalytic activities of DNA gyrase by preventing its interaction with DNA. Acts by binding directly to the C-terminal domain of GyrB, which probably disrupts DNA binding by the gyrase. This Klebsiella pneumoniae subsp. pneumoniae (strain ATCC 700721 / MGH 78578) protein is DNA gyrase inhibitor YacG.